The following is a 322-amino-acid chain: Ferredoxin--NADP reductase (322 aa).

Positions 34, 42, 47, 87, 120, 279, and 320 each coordinate FAD.

Belongs to the ferredoxin--NADP reductase type 2 family. In terms of assembly, homodimer. FAD serves as cofactor.

The enzyme catalyses 2 reduced [2Fe-2S]-[ferredoxin] + NADP(+) + H(+) = 2 oxidized [2Fe-2S]-[ferredoxin] + NADPH. This is Ferredoxin--NADP reductase from Streptococcus sanguinis (strain SK36).